The following is a 433-amino-acid chain: MTSQAPPQPASSPGVAAPAAASSIPNLKDRLPKLEPRKRRSGPSNPTPIPETPALPTPPDTSSNWTFKTPSRRILSKKDHDIFLSSPTCKLVTAWVFGLAESIVDTPNSAIRDADLSALIKTILHILDETEQLVTKSPPNEQGGSRFGNKAFRGLLDLAQKNSAAWHHDIGVQNEDAINELSTYFCESFGNANRIDYGSGHELNFMIWLLCLYQLGLLKQSDFKPIVLRVFVRYLEVMRVIQMTYYLEPAGSHGVWGLDDYQFLPFLFGATQLLHHPYITPRAIHQDLTLEEFGHEYMYLGQVSFVNSTKTVKGLRWHSPMLDDISSARSWTKIDGGMRRMFVAEVLGKLPVMQHFLFGSLVPADDSMSEDTGAGDEADVEDDPHAGHDHTGKAHDGTGWGDCCGIKVPSSIAAAQEMKKRGMNQGLRRIPFD.

The segment covering 1 to 10 (MTSQAPPQPA) has biased composition (pro residues). Disordered stretches follow at residues 1–67 (MTSQ…NWTF) and 367–400 (SMSE…GTGW). Over residues 11-23 (SSPGVAAPAAASS) the composition is skewed to low complexity. A compositionally biased stretch (pro residues) spans 45 to 59 (NPTPIPETPALPTPP). Acidic residues predominate over residues 367–382 (SMSEDTGAGDEADVED). Residues 383–396 (DPHAGHDHTGKAHD) show a composition bias toward basic and acidic residues.

The protein belongs to the PTPA-type PPIase family.

Its subcellular location is the cytoplasm. It carries out the reaction [protein]-peptidylproline (omega=180) = [protein]-peptidylproline (omega=0). PPIases accelerate the folding of proteins. It catalyzes the cis-trans isomerization of proline imidic peptide bonds in oligopeptides. Acts as a regulatory subunit for PP2A-like phosphatases modulating their activity or substrate specificity, probably by inducing a conformational change in the catalytic subunit, a direct target of the PPIase. Can reactivate inactive phosphatase PP2A-phosphatase methylesterase complexes (PP2Ai) in presence of ATP and Mg(2+) by dissociating the inactive form from the complex. The polypeptide is Serine/threonine-protein phosphatase 2A activator 2 (RRD2) (Gibberella zeae (strain ATCC MYA-4620 / CBS 123657 / FGSC 9075 / NRRL 31084 / PH-1) (Wheat head blight fungus)).